The chain runs to 267 residues: Tryptophan synthase alpha chain (267 aa).

Active-site proton acceptor residues include Glu-49 and Asp-60.

It belongs to the TrpA family. In terms of assembly, tetramer of two alpha and two beta chains.

The catalysed reaction is (1S,2R)-1-C-(indol-3-yl)glycerol 3-phosphate + L-serine = D-glyceraldehyde 3-phosphate + L-tryptophan + H2O. It functions in the pathway amino-acid biosynthesis; L-tryptophan biosynthesis; L-tryptophan from chorismate: step 5/5. The alpha subunit is responsible for the aldol cleavage of indoleglycerol phosphate to indole and glyceraldehyde 3-phosphate. The sequence is that of Tryptophan synthase alpha chain from Chloroflexus aggregans (strain MD-66 / DSM 9485).